A 953-amino-acid polypeptide reads, in one-letter code: Lysosomal alpha-glucosidase (953 aa).

The signal sequence occupies residues M1 to L27. Residues G28–Q69 constitute a propeptide that is removed on maturation. A P-type domain is found at T80–P131. Disulfide bonds link C82-C109, C92-C108, and C103-C127. N140, N233, and N390 each carry an N-linked (GlcNAc...) asparagine glycan. A substrate-binding site is contributed by D404. N470 is a glycosylation site (N-linked (GlcNAc...) asparagine). D518 functions as the Nucleophile in the catalytic mechanism. Residue E521 is part of the active site. A disulfide bond links C533 and C558. Substrate contacts are provided by R600 and D616. The cysteines at positions 647 and 658 are disulfide-linked. H674 is a binding site for substrate. N-linked (GlcNAc...) asparagine glycans are attached at residues N883, N926, and N933.

This sequence belongs to the glycosyl hydrolase 31 family.

Its subcellular location is the lysosome. The protein resides in the lysosome membrane. The enzyme catalyses Hydrolysis of terminal, non-reducing (1-&gt;4)-linked alpha-D-glucose residues with release of alpha-D-glucose.. In terms of biological role, essential for the degradation of glycogen in lysosomes. Has highest activity on alpha-1,4-linked glycosidic linkages, but can also hydrolyze alpha-1,6-linked glucans. This is Lysosomal alpha-glucosidase (Gaa) from Mus musculus (Mouse).